A 195-amino-acid chain; its full sequence is Protein GrpE (195 aa).

It belongs to the GrpE family. As to quaternary structure, homodimer.

It localises to the cytoplasm. Participates actively in the response to hyperosmotic and heat shock by preventing the aggregation of stress-denatured proteins, in association with DnaK and GrpE. It is the nucleotide exchange factor for DnaK and may function as a thermosensor. Unfolded proteins bind initially to DnaJ; upon interaction with the DnaJ-bound protein, DnaK hydrolyzes its bound ATP, resulting in the formation of a stable complex. GrpE releases ADP from DnaK; ATP binding to DnaK triggers the release of the substrate protein, thus completing the reaction cycle. Several rounds of ATP-dependent interactions between DnaJ, DnaK and GrpE are required for fully efficient folding. The protein is Protein GrpE of Francisella tularensis subsp. holarctica (strain OSU18).